A 248-amino-acid chain; its full sequence is Deoxyribose-phosphate aldolase (248 aa).

The active-site Proton donor/acceptor is D106. K168 acts as the Schiff-base intermediate with acetaldehyde in catalysis. K197 (proton donor/acceptor) is an active-site residue.

The protein belongs to the DeoC/FbaB aldolase family. DeoC type 1 subfamily.

It localises to the cytoplasm. It catalyses the reaction 2-deoxy-D-ribose 5-phosphate = D-glyceraldehyde 3-phosphate + acetaldehyde. It participates in carbohydrate degradation; 2-deoxy-D-ribose 1-phosphate degradation; D-glyceraldehyde 3-phosphate and acetaldehyde from 2-deoxy-alpha-D-ribose 1-phosphate: step 2/2. Its function is as follows. Catalyzes a reversible aldol reaction between acetaldehyde and D-glyceraldehyde 3-phosphate to generate 2-deoxy-D-ribose 5-phosphate. In Rhizobium meliloti (strain 1021) (Ensifer meliloti), this protein is Deoxyribose-phosphate aldolase.